Here is a 196-residue protein sequence, read N- to C-terminus: Type-4 uracil-DNA glycosylase (196 aa).

[4Fe-4S] cluster contacts are provided by Cys-13 and Cys-16. Residues 40 to 42 (GEA), Phe-54, and Asn-80 each bind uracil. Residues Cys-84 and Cys-100 each contribute to the [4Fe-4S] cluster site. Residue His-162 participates in uracil binding.

This sequence belongs to the uracil-DNA glycosylase (UDG) superfamily. Type 4 (UDGa) family.

The enzyme catalyses Hydrolyzes single-stranded DNA or mismatched double-stranded DNA and polynucleotides, releasing free uracil.. Functionally, removes uracil bases that are present in DNA as a result of either deamination of cytosine or misincorporation of dUMP instead of dTMP. Can remove uracil from double-stranded DNA containing either a U/G or U/A base pair as well as from single-stranded DNA. The sequence is that of Type-4 uracil-DNA glycosylase from Pyrobaculum aerophilum (strain ATCC 51768 / DSM 7523 / JCM 9630 / CIP 104966 / NBRC 100827 / IM2).